The chain runs to 567 residues: Putative laccase-17 (567 aa).

The signal sequence occupies residues 1–22 (MPSRGCSCWLLSLALLCSLAAA). Plastocyanin-like domains follow at residues 30–146 (VIRE…PRDG) and 158–310 (ELAP…YGAA). Asn76 carries an N-linked (GlcNAc...) asparagine glycan. Residues His80, His82, His125, and His127 each contribute to the Cu cation site. N-linked (GlcNAc...) asparagine glycosylation is found at Asn187, Asn241, Asn298, Asn312, Asn327, Asn365, Asn368, Asn378, Asn388, and Asn430. Positions 415–551 (DFPANPPVQF…AMAFLVDDGV (137 aa)) constitute a Plastocyanin-like 3 domain. 7 residues coordinate Cu cation: His468, His471, His473, His530, Cys531, His532, and His536.

The protein belongs to the multicopper oxidase family. It depends on Cu cation as a cofactor.

The protein localises to the secreted. It localises to the extracellular space. It is found in the apoplast. It carries out the reaction 4 hydroquinone + O2 = 4 benzosemiquinone + 2 H2O. Functionally, lignin degradation and detoxification of lignin-derived products. The protein is Putative laccase-17 (LAC17) of Oryza sativa subsp. japonica (Rice).